The chain runs to 296 residues: Small ribosomal subunit protein uS2 (296 aa).

Residues 245 to 296 (WEAPAAGFAGATGTGWDGAAGDEWGAAPATTEWAASAAPAAASGEAAKETTW) form a disordered region. A compositionally biased stretch (low complexity) spans 263–289 (AAGDEWGAAPATTEWAASAAPAAASGE).

This sequence belongs to the universal ribosomal protein uS2 family. In terms of assembly, component of the small ribosomal subunit. Mature ribosomes consist of a small (40S) and a large (60S) subunit. The 40S subunit contains about 33 different proteins and 1 molecule of RNA (18S). The 60S subunit contains about 49 different proteins and 3 molecules of RNA (25S, 5.8S and 5S). Interacts with RPS21.

Its subcellular location is the cytoplasm. Functionally, required for the assembly and/or stability of the 40S ribosomal subunit. Required for the processing of the 20S rRNA-precursor to mature 18S rRNA in a late step of the maturation of 40S ribosomal subunits. The protein is Small ribosomal subunit protein uS2 of Fusarium vanettenii (strain ATCC MYA-4622 / CBS 123669 / FGSC 9596 / NRRL 45880 / 77-13-4) (Fusarium solani subsp. pisi).